We begin with the raw amino-acid sequence, 509 residues long: Maturase K (509 aa).

Belongs to the intron maturase 2 family. MatK subfamily.

The protein localises to the plastid. It is found in the chloroplast. Functionally, usually encoded in the trnK tRNA gene intron. Probably assists in splicing its own and other chloroplast group II introns. The polypeptide is Maturase K (Eucommia ulmoides (Hardy rubber tree)).